A 367-amino-acid polypeptide reads, in one-letter code: Methylthioribose-1-phosphate isomerase (367 aa).

Residue Asp250 is the Proton donor of the active site.

Belongs to the eIF-2B alpha/beta/delta subunits family. MtnA subfamily.

It is found in the cytoplasm. Its subcellular location is the nucleus. It carries out the reaction 5-(methylsulfanyl)-alpha-D-ribose 1-phosphate = 5-(methylsulfanyl)-D-ribulose 1-phosphate. It functions in the pathway amino-acid biosynthesis; L-methionine biosynthesis via salvage pathway; L-methionine from S-methyl-5-thio-alpha-D-ribose 1-phosphate: step 1/6. Functionally, catalyzes the interconversion of methylthioribose-1-phosphate (MTR-1-P) into methylthioribulose-1-phosphate (MTRu-1-P). This chain is Methylthioribose-1-phosphate isomerase (IDI2), found in Hordeum vulgare (Barley).